The following is a 71-amino-acid chain: Serine palmitoyltransferase small subunit A (71 aa).

The Cytoplasmic segment spans residues 1 to 12 (MAGMALARAWKQ). Residues 13 to 29 (MSWFYYQYLLVTALYML) form a helical membrane-spanning segment. Topologically, residues 30–34 (EPWER) are lumenal. A helical membrane pass occupies residues 35–57 (TVFNSMLVSIVGMALYTGYVFMP). Topologically, residues 58–71 (QHIMAILHYFEIVQ) are cytoplasmic.

It belongs to the SPTSS family. SPTSSA subfamily. Component of the serine palmitoyltransferase (SPT) complex, which is composed of SPTLC1, SPTLC2 or SPTLC3 and SPTSSA or SPTSSB. The heterodimer consisting of SPTLC1 and SPTLC2/SPTLC3 forms the catalytic core of the enzyme, while SPTSSA or SPTSSB subunits determine substrate specificity. SPT also interacts with ORMDL proteins, especially ORMDL3, which negatively regulate SPT activity in the presence of ceramides. Interacts with MBOAT7; the interaction plays a role in MBOAT7 localization to mitochondria-associated membranes.

Its subcellular location is the endoplasmic reticulum membrane. It functions in the pathway lipid metabolism; sphingolipid metabolism. Its function is as follows. Component of the serine palmitoyltransferase multisubunit enzyme (SPT) that catalyzes the initial and rate-limiting step in sphingolipid biosynthesis by condensing L-serine and activated acyl-CoA (most commonly palmitoyl-CoA) to form long-chain bases. The SPT complex is composed of SPTLC1, SPTLC2 or SPTLC3 and SPTSSA or SPTSSB. Within this complex, the heterodimer consisting of SPTLC1 and SPTLC2/SPTLC3 forms the catalytic core. Within the SPT complex, SPTSSA stimulates the catalytic activity and plays a role in substrate specificity, which depends upon the overall complex composition. The SPTLC1-SPTLC2-SPTSSA complex shows a strong preference for C16-CoA substrate, while the SPTLC1-SPTLC3-SPTSSA isozyme uses both C14-CoA and C16-CoA as substrates, with a slight preference for C14-CoA. Independently of its action as a SPT component, may be involved in MBOAT7 localization to mitochondria-associated membranes, a membrane bridge between the endoplasmic reticulum and mitochondria, may hence affect MBOAT7-catalyzed incorporation of arachidonic acid into phosphatidylinositol. The protein is Serine palmitoyltransferase small subunit A of Homo sapiens (Human).